Reading from the N-terminus, the 207-residue chain is Ribosomal RNA small subunit methyltransferase G (207 aa).

S-adenosyl-L-methionine contacts are provided by residues G73, L78, 124 to 125 (VE), and R139.

This sequence belongs to the methyltransferase superfamily. RNA methyltransferase RsmG family.

Its subcellular location is the cytoplasm. The catalysed reaction is guanosine(527) in 16S rRNA + S-adenosyl-L-methionine = N(7)-methylguanosine(527) in 16S rRNA + S-adenosyl-L-homocysteine. Functionally, specifically methylates the N7 position of guanine in position 527 of 16S rRNA. The polypeptide is Ribosomal RNA small subunit methyltransferase G (Salmonella agona (strain SL483)).